The sequence spans 186 residues: Large ribosomal subunit protein uL22 (186 aa).

The interval 161 to 186 is disordered; that stretch reads VDDEPAKKKLSKKKLQRQKEKMLRSE. Residues 177–186 show a composition bias toward basic and acidic residues; that stretch reads RQKEKMLRSE.

It belongs to the universal ribosomal protein uL22 family.

The chain is Large ribosomal subunit protein uL22 (RpL17) from Drosophila pseudoobscura pseudoobscura (Fruit fly).